A 124-amino-acid chain; its full sequence is Glycine cleavage system H protein (124 aa).

One can recognise a Lipoyl-binding domain in the interval 22–104 (KAKVGITDFA…YENGYLFIIE (83 aa)). N6-lipoyllysine is present on lysine 63.

Belongs to the GcvH family. In terms of assembly, the glycine cleavage system is composed of four proteins: P, T, L and H. It depends on (R)-lipoate as a cofactor.

Its function is as follows. The glycine cleavage system catalyzes the degradation of glycine. The H protein shuttles the methylamine group of glycine from the P protein to the T protein. This chain is Glycine cleavage system H protein, found in Endomicrobium trichonymphae.